Reading from the N-terminus, the 647-residue chain is Macrolide export ATP-binding/permease protein MacB 2 (647 aa).

Residues 6-244 (IQLKGIERRY…VTPTAAPAGK (239 aa)) enclose the ABC transporter domain. Position 42–49 (42–49 (GASGSGKS)) interacts with ATP. Positions 223–247 (QEDSGRKPAAVPVTPTAAPAGKEGV) are disordered. The span at 230–242 (PAAVPVTPTAAPA) shows a compositional bias: low complexity. The next 4 helical transmembrane spans lie at 273-293 (FLTMLGIIIGIAAVVSVVALG), 527-547 (IAVISLIVGGVGVMNIMLVSV), 581-601 (LGGMLGVGVSLFIGLLFSLFV), and 610-630 (LFSILMAFGCSSLIGILFGYL).

It belongs to the ABC transporter superfamily. Macrolide exporter (TC 3.A.1.122) family. Homodimer. Part of the tripartite efflux system MacAB-TolC, which is composed of an inner membrane transporter, MacB, a periplasmic membrane fusion protein, MacA, and an outer membrane component, TolC. The complex forms a large protein conduit and can translocate molecules across both the inner and outer membranes. Interacts with MacA.

The protein resides in the cell inner membrane. Functionally, part of the tripartite efflux system MacAB-TolC. MacB is a non-canonical ABC transporter that contains transmembrane domains (TMD), which form a pore in the inner membrane, and an ATP-binding domain (NBD), which is responsible for energy generation. Confers resistance against macrolides. This chain is Macrolide export ATP-binding/permease protein MacB 2, found in Aeromonas hydrophila subsp. hydrophila (strain ATCC 7966 / DSM 30187 / BCRC 13018 / CCUG 14551 / JCM 1027 / KCTC 2358 / NCIMB 9240 / NCTC 8049).